The primary structure comprises 318 residues: Pheromone-regulated membrane protein 5 (318 aa).

The chain crosses the membrane as a helical span at residues 78–98 (FIVVGGIAGVIFLAILLWWVI). Residue serine 129 is modified to Phosphoserine. Positions 238-247 (TISSSSASSL) are enriched in low complexity. The segment at 238–318 (TISSSSASSL…HMLEGKEQDE (81 aa)) is disordered. A compositionally biased stretch (basic and acidic residues) spans 250-261 (GNEKEVGEDIRK). Residues 276-285 (SPESDGSVNR) are compositionally biased toward polar residues. A phosphoserine mark is found at serine 279, serine 282, and serine 288. The segment covering 309 to 318 (HMLEGKEQDE) has biased composition (basic and acidic residues). Lysine 314 participates in a covalent cross-link: Glycyl lysine isopeptide (Lys-Gly) (interchain with G-Cter in ubiquitin).

It belongs to the PRM5 family.

The protein resides in the membrane. This chain is Pheromone-regulated membrane protein 5 (PRM5), found in Saccharomyces cerevisiae (strain Lalvin EC1118 / Prise de mousse) (Baker's yeast).